The primary structure comprises 176 residues: NAD(P)H-quinone oxidoreductase subunit 6, chloroplastic (176 aa).

5 helical membrane passes run 10–30 (FLLV…VLLT), 32–52 (PIFS…FHIP), 60–80 (AAQL…AVMF), 107–127 (IFVS…IWTT), and 152–172 (FFLP…GAIA).

Belongs to the complex I subunit 6 family. In terms of assembly, NDH is composed of at least 16 different subunits, 5 of which are encoded in the nucleus.

The protein resides in the plastid. The protein localises to the chloroplast thylakoid membrane. It carries out the reaction a plastoquinone + NADH + (n+1) H(+)(in) = a plastoquinol + NAD(+) + n H(+)(out). It catalyses the reaction a plastoquinone + NADPH + (n+1) H(+)(in) = a plastoquinol + NADP(+) + n H(+)(out). NDH shuttles electrons from NAD(P)H:plastoquinone, via FMN and iron-sulfur (Fe-S) centers, to quinones in the photosynthetic chain and possibly in a chloroplast respiratory chain. The immediate electron acceptor for the enzyme in this species is believed to be plastoquinone. Couples the redox reaction to proton translocation, and thus conserves the redox energy in a proton gradient. This is NAD(P)H-quinone oxidoreductase subunit 6, chloroplastic (ndhG) from Buxus microphylla (Littleleaf boxwood).